The chain runs to 511 residues: Coatomer subunit delta (511 aa).

The span at 168-177 shows a compositional bias: basic and acidic residues; that stretch reads QARRDAERQG. The interval 168 to 188 is disordered; the sequence is QARRDAERQGKKAPGFGGFGS. Phosphoserine is present on S223. Residues K233 and K241 each carry the N6-acetyllysine modification. At S244 the chain carries Phosphoserine. The MHD domain maps to 271–511; the sequence is MESVHMKIEE…TFLVDKYEIL (241 aa). N6-acetyllysine occurs at positions 309 and 351. The residue at position 493 (S493) is a Phosphoserine.

The protein belongs to the adaptor complexes medium subunit family. Delta-COP subfamily. Oligomeric complex that consists of at least the alpha, beta, beta', gamma, delta, epsilon and zeta subunits.

The protein resides in the cytoplasm. It is found in the golgi apparatus membrane. It localises to the cytoplasmic vesicle. The protein localises to the COPI-coated vesicle membrane. In terms of biological role, the coatomer is a cytosolic protein complex that binds to dilysine motifs and reversibly associates with Golgi non-clathrin-coated vesicles, which further mediate biosynthetic protein transport from the ER, via the Golgi up to the trans Golgi network. Coatomer complex is required for budding from Golgi membranes, and is essential for the retrograde Golgi-to-ER transport of dilysine-tagged proteins. In mammals, the coatomer can only be recruited by membranes associated to ADP-ribosylation factors (ARFs), which are small GTP-binding proteins; the complex also influences the Golgi structural integrity, as well as the processing, activity, and endocytic recycling of LDL receptors. In Mus musculus (Mouse), this protein is Coatomer subunit delta (Arcn1).